Consider the following 721-residue polypeptide: S-adenosyl-L-methionine-dependent tRNA 4-demethylwyosine synthase TYW1 (721 aa).

The Flavodoxin-like domain maps to Val-71 to Ile-229. FMN-binding positions include Ser-77–Thr-81 and Val-168–Leu-200. 2 disordered regions span residues Ala-242–Thr-291 and Asp-305–Gly-339. Residues Gly-250 to Asp-274 are compositionally biased toward basic and acidic residues. Acidic residues predominate over residues Ala-275–Gly-290. Residues Val-313–Gly-325 show a composition bias toward basic and acidic residues. Residues Tyr-389 to Glu-635 enclose the Radical SAM core domain. Positions 405, 409, and 412 each coordinate [4Fe-4S] cluster.

It belongs to the TYW1 family. It depends on [4Fe-4S] cluster as a cofactor.

It catalyses the reaction N(1)-methylguanosine(37) in tRNA(Phe) + pyruvate + S-adenosyl-L-methionine = 4-demethylwyosine(37) in tRNA(Phe) + 5'-deoxyadenosine + L-methionine + CO2 + H2O. The protein operates within tRNA modification; wybutosine-tRNA(Phe) biosynthesis. In terms of biological role, probable component of the wybutosine biosynthesis pathway. Wybutosine is a hyper modified guanosine with a tricyclic base found at the 3'-position adjacent to the anticodon of eukaryotic phenylalanine tRNA. Catalyzes the condensation of N-methylguanine with 2 carbon atoms from pyruvate to form the tricyclic 4-demethylwyosine, an intermediate in wybutosine biosynthesis. The polypeptide is S-adenosyl-L-methionine-dependent tRNA 4-demethylwyosine synthase TYW1 (Tyw1) (Mus musculus (Mouse)).